The chain runs to 529 residues: Beta-hexosaminidase subunit alpha (529 aa).

Residues 1–22 (MASSRLWFSLLLAAALAGRATA) form the signal peptide. A propeptide spanning residues 23 to 88 (LWPWPQNIQT…PRPYLTGKRH (66 aa)) is cleaved from the precursor. C58 and C104 form a disulfide bridge. N-linked (GlcNAc...) asparagine glycans are attached at residues N115, N157, and N295. C277 and C328 are oxidised to a cystine. The Proton donor role is filled by E323. The critical for hydrolysis GM2 gangliosides stretch occupies residues 423 to 424 (NR). Cysteines 505 and 522 form a disulfide.

It belongs to the glycosyl hydrolase 20 family. In terms of assembly, there are 3 beta-hexosaminidase isozymes: isozyme A (hexosaminidase A) is a heterodimer composed of one subunit alpha and one subunit beta (chain A and B); isozyme B (hexosaminidase B) is a homodimer of two beta subunits (two chains A and B); isozyme S (hexosaminidase S) is a homodimer of two alpha subunits. The composition of the dimer (isozyme A versus isozyme S) has a significant effect on the substrate specificity of the alpha subunit active site.

It is found in the lysosome. It catalyses the reaction Hydrolysis of terminal non-reducing N-acetyl-D-hexosamine residues in N-acetyl-beta-D-hexosaminides.. It carries out the reaction N-acetyl-beta-D-galactosaminyl-(1-&gt;4)-beta-D-3-sulfogalactosyl-(1-&gt;4)-beta-D-glucosyl-(1&lt;-&gt;1')-ceramide + H2O = a beta-D-3-sulfogalactosyl-(1-&gt;4)-beta-D-glucosyl-(1&lt;-&gt;1')-ceramide + N-acetyl-beta-D-galactosamine. The enzyme catalyses a ganglioside GM2 (d18:1(4E)) + H2O = a ganglioside GM3 (d18:1(4E)) + N-acetyl-beta-D-galactosamine. The catalysed reaction is a ganglioside GM2 + H2O = a ganglioside GM3 + N-acetyl-beta-D-galactosamine. It catalyses the reaction beta-D-GalNAc-(1-&gt;4)-alpha-L-IdoA-(1-&gt;3)-beta-D-GalNAc-4-sulfate-(1-&gt;4)-alpha-L-IdoA-(1-&gt;3)-D-GalNAc-4-sulfate + H2O = alpha-L-IdoA-(1-&gt;3)-beta-D-GalNAc-4-sulfate-(1-&gt;4)-alpha-L-IdoA-(1-&gt;3)-D-GalNAc-4-sulfate + N-acetyl-D-galactosamine. It carries out the reaction N-acetyl-beta-D-6-sulfogalactosaminyl-(1-&gt;4)-alpha-L-iduronyl-(1-&gt;3)-N-acetyl-D-6-sulfogalactosamine + H2O = alpha-L-iduronyl-(1-&gt;3)-N-acetyl-D-6-sulfogalactosamine + N-acetyl-D-6-sulfogalactosamine. Addition of GM2A stimulates the hydrolysis of sulfated glycosphingolipid SM2 and the ganglioside GM2. Functionally, hydrolyzes the non-reducing end N-acetyl-D-hexosamine and/or sulfated N-acetyl-D-hexosamine of glycoconjugates, such as the oligosaccharide moieties from proteins and neutral glycolipids, or from certain mucopolysaccharides. The isozyme S is as active as the isozyme A on the anionic bis-sulfated glycans, the chondroitin-6-sulfate trisaccharide (C6S-3), and the dermatan sulfate pentasaccharide, and the sulfated glycosphingolipid SM2. The isozyme B does not hydrolyze each of these substrates, however hydrolyzes efficiently neutral oligosaccharide. Only the isozyme A is responsible for the degradation of GM2 gangliosides in the presence of GM2A. The chain is Beta-hexosaminidase subunit alpha from Pongo abelii (Sumatran orangutan).